The chain runs to 160 residues: Lipoprotein signal peptidase (160 aa).

Transmembrane regions (helical) follow at residues 63–83 and 89–109; these read YRLPFFILVSVVALGVIAVTF and DQHLAAAALALIFSGALGNLI. Residues D119 and D137 contribute to the active site. A helical membrane pass occupies residues 132-152; it reads AFNVADSAICVGVALLAVDMI.

The protein belongs to the peptidase A8 family.

The protein resides in the cell inner membrane. It carries out the reaction Release of signal peptides from bacterial membrane prolipoproteins. Hydrolyzes -Xaa-Yaa-Zaa-|-(S,diacylglyceryl)Cys-, in which Xaa is hydrophobic (preferably Leu), and Yaa (Ala or Ser) and Zaa (Gly or Ala) have small, neutral side chains.. Its pathway is protein modification; lipoprotein biosynthesis (signal peptide cleavage). This protein specifically catalyzes the removal of signal peptides from prolipoproteins. The polypeptide is Lipoprotein signal peptidase (Geobacter sulfurreducens (strain ATCC 51573 / DSM 12127 / PCA)).